The chain runs to 433 residues: Glutamate-1-semialdehyde 2,1-aminomutase (433 aa).

Lys273 bears the N6-(pyridoxal phosphate)lysine mark.

This sequence belongs to the class-III pyridoxal-phosphate-dependent aminotransferase family. HemL subfamily. In terms of assembly, homodimer. The cofactor is pyridoxal 5'-phosphate.

It localises to the cytoplasm. The catalysed reaction is (S)-4-amino-5-oxopentanoate = 5-aminolevulinate. Its pathway is porphyrin-containing compound metabolism; protoporphyrin-IX biosynthesis; 5-aminolevulinate from L-glutamyl-tRNA(Glu): step 2/2. It functions in the pathway porphyrin-containing compound metabolism; chlorophyll biosynthesis. In Gloeothece citriformis (strain PCC 7424) (Cyanothece sp. (strain PCC 7424)), this protein is Glutamate-1-semialdehyde 2,1-aminomutase.